A 343-amino-acid chain; its full sequence is tRNA N6-adenosine threonylcarbamoyltransferase (343 aa).

Fe cation contacts are provided by His116 and His120. Residues Thr139–Gly143, Asp172, Gly185, Asp189, and Asn280 each bind substrate. Position 308 (Asp308) interacts with Fe cation.

This sequence belongs to the KAE1 / TsaD family. It depends on Fe(2+) as a cofactor.

The protein localises to the cytoplasm. The catalysed reaction is L-threonylcarbamoyladenylate + adenosine(37) in tRNA = N(6)-L-threonylcarbamoyladenosine(37) in tRNA + AMP + H(+). Required for the formation of a threonylcarbamoyl group on adenosine at position 37 (t(6)A37) in tRNAs that read codons beginning with adenine. Is involved in the transfer of the threonylcarbamoyl moiety of threonylcarbamoyl-AMP (TC-AMP) to the N6 group of A37, together with TsaE and TsaB. TsaD likely plays a direct catalytic role in this reaction. The protein is tRNA N6-adenosine threonylcarbamoyltransferase of Cytophaga hutchinsonii (strain ATCC 33406 / DSM 1761 / CIP 103989 / NBRC 15051 / NCIMB 9469 / D465).